The sequence spans 400 residues: Cell division protein FtsZ 2 (400 aa).

Over residues 1 to 16 the composition is skewed to basic and acidic residues; sequence MQDIVREAMERDEAER. A disordered region spans residues 1-30; sequence MQDIVREAMERDEAERQTQSSLEDSDDQFG. Residues 41 to 45, 128 to 130, glutamate 159, arginine 162, and aspartate 205 each bind GTP; these read GAGNN and GTG. Residues 338–400 are disordered; sequence VLGPSTQKQA…EKNNGLDVIR (63 aa). A compositionally biased stretch (low complexity) spans 352–364; the sequence is QSIQSRESQQQHS. The span at 365 to 382 shows a compositional bias: polar residues; it reads GSEFDSSERAQTAQSGTW. The span at 385 to 400 shows a compositional bias: basic and acidic residues; the sequence is GGRDEVEKNNGLDVIR.

The protein belongs to the FtsZ family. Homodimer. Polymerizes to form a dynamic ring structure in a strictly GTP-dependent manner. Interacts directly with several other division proteins. Interacts with SepF.

The protein localises to the cytoplasm. Essential cell division protein that forms a contractile ring structure (Z ring) at the future cell division site. The regulation of the ring assembly controls the timing and the location of cell division. One of the functions of the FtsZ ring is to recruit other cell division proteins to the septum to produce a new cell wall between the dividing cells. Binds GTP and shows GTPase activity. Required for division ring constriction. The chain is Cell division protein FtsZ 2 from Haloferax volcanii (strain ATCC 29605 / DSM 3757 / JCM 8879 / NBRC 14742 / NCIMB 2012 / VKM B-1768 / DS2) (Halobacterium volcanii).